Reading from the N-terminus, the 142-residue chain is gSG7 salivary protein (142 aa).

The first 26 residues, M1 to A26, serve as a signal peptide directing secretion. 2 disulfides stabilise this stretch: C84–C139 and C107–C117.

Associates with activated host C3-convertase complex C3bBb (C3-CFB). Interacts with host properdin (CFP), a regulator of the alternate pathway of complement. In terms of tissue distribution, female salivary gland (at protein level).

The protein localises to the secreted. Functionally, salivary protein that potently inhibits the alternative pathway of complement system activation in the host while having no inhibitory effect on the classical or lectin pathways. Binds and stabilizes activated host C3-convertase complex C3bBb (C3-CFB) and inhibits its convertase activity. Enhances accumulation of C3bBb on immobilized properdin. The sequence is that of gSG7 salivary protein from Anopheles albimanus (New world malaria mosquito).